The primary structure comprises 328 residues: tRNA uridine(34) hydroxylase (328 aa).

The Rhodanese domain occupies 130 to 224; sequence LDEDTVVLDT…YGKDPEVQGE (95 aa). C184 (cysteine persulfide intermediate) is an active-site residue.

This sequence belongs to the TrhO family.

The enzyme catalyses uridine(34) in tRNA + AH2 + O2 = 5-hydroxyuridine(34) in tRNA + A + H2O. In terms of biological role, catalyzes oxygen-dependent 5-hydroxyuridine (ho5U) modification at position 34 in tRNAs. This chain is tRNA uridine(34) hydroxylase, found in Streptococcus sanguinis (strain SK36).